The chain runs to 84 residues: UPF0291 protein SMU_447 (84 aa).

Residues Glu-57–Ser-84 form a disordered region.

The protein belongs to the UPF0291 family.

The protein localises to the cytoplasm. The polypeptide is UPF0291 protein SMU_447 (Streptococcus mutans serotype c (strain ATCC 700610 / UA159)).